Here is a 79-residue protein sequence, read N- to C-terminus: Acyl carrier protein (79 aa).

The Carrier domain maps to 2 to 77 (SEIGERVKKI…DATKFLEKNA (76 aa)). Serine 37 is subject to O-(pantetheine 4'-phosphoryl)serine.

Belongs to the acyl carrier protein (ACP) family. Post-translationally, 4'-phosphopantetheine is transferred from CoA to a specific serine of apo-ACP by AcpS. This modification is essential for activity because fatty acids are bound in thioester linkage to the sulfhydryl of the prosthetic group.

The protein resides in the cytoplasm. Its pathway is lipid metabolism; fatty acid biosynthesis. In terms of biological role, carrier of the growing fatty acid chain in fatty acid biosynthesis. The chain is Acyl carrier protein from Afipia carboxidovorans (strain ATCC 49405 / DSM 1227 / KCTC 32145 / OM5) (Oligotropha carboxidovorans).